Reading from the N-terminus, the 259-residue chain is ATP synthase subunit a (259 aa).

The next 5 membrane-spanning stretches (helical) occupy residues 29 to 49 (TVNIDSMIFSVILGALFIWIF), 90 to 110 (IAPLALTVFIWVFLMNLMDLI), 134 to 154 (DVNITMSMALGVFALIIIYSI), 208 to 228 (LVFILIAGLLPWWSQWLLSVP), and 230 to 250 (ALFHILVITLQAFIFMVLTIV).

Belongs to the ATPase A chain family. In terms of assembly, F-type ATPases have 2 components, CF(1) - the catalytic core - and CF(0) - the membrane proton channel. CF(1) has five subunits: alpha(3), beta(3), gamma(1), delta(1), epsilon(1). CF(0) has three main subunits: a(1), b(2) and c(9-12). The alpha and beta chains form an alternating ring which encloses part of the gamma chain. CF(1) is attached to CF(0) by a central stalk formed by the gamma and epsilon chains, while a peripheral stalk is formed by the delta and b chains.

Its subcellular location is the cell inner membrane. Its function is as follows. Key component of the proton channel; it plays a direct role in the translocation of protons across the membrane. In Aeromonas salmonicida (strain A449), this protein is ATP synthase subunit a.